The primary structure comprises 482 residues: ADP-ribosylation factor GTPase-activating protein effector protein 1 (482 aa).

The disordered stretch occupies residues 116 to 156 (QHKSTHSHHINHQTHPIHSSSSNSNSNNRIPTKTDSSKQHT). A compositionally biased stretch (basic residues) spans 118–127 (KSTHSHHINH). Residues 134 to 143 (SSSSNSNSNN) are compositionally biased toward low complexity. An Arf-GAP domain is found at 170 to 297 (DELLSIVRKI…FVIDSNQGRE (128 aa)). The segment at 186–210 (CCDCGSTATVEWVSINLLCILCIKC) adopts a C4-type zinc-finger fold.

The protein localises to the cytoplasm. Its function is as follows. GTPase-activating protein (GAP) for the ADP ribosylation factors ARF1 and ARF2. May be involved in the endocytic pathway. This chain is ADP-ribosylation factor GTPase-activating protein effector protein 1 (AGE1), found in Saccharomyces cerevisiae (strain ATCC 204508 / S288c) (Baker's yeast).